The chain runs to 242 residues: Ribose-5-phosphate isomerase A (242 aa).

Residues 39–42 (SGST), 95–98 (DGAD), and 108–111 (KGGG) each bind substrate. Residue glutamate 117 is the Proton acceptor of the active site. Residue lysine 135 participates in substrate binding.

Belongs to the ribose 5-phosphate isomerase family. As to quaternary structure, homodimer.

The enzyme catalyses aldehydo-D-ribose 5-phosphate = D-ribulose 5-phosphate. It participates in carbohydrate degradation; pentose phosphate pathway; D-ribose 5-phosphate from D-ribulose 5-phosphate (non-oxidative stage): step 1/1. Its function is as follows. Catalyzes the reversible conversion of ribose-5-phosphate to ribulose 5-phosphate. The polypeptide is Ribose-5-phosphate isomerase A (Chlamydia trachomatis serovar L2 (strain ATCC VR-902B / DSM 19102 / 434/Bu)).